Here is a 357-residue protein sequence, read N- to C-terminus: Iron deficiency-induced protein A (357 aa).

A signal peptide (tat-type signal) is located at residues 1-36; that stretch reads MSESMFSRRDFLLGGTALAGTLLLDSFGDWRRRAEA. Positions 48, 49, 182, 238, and 239 each coordinate Fe cation.

Belongs to the bacterial solute-binding protein 1 family. Predicted to be exported by the Tat system. The position of the signal peptide cleavage has not been experimentally proven.

The protein resides in the cellular thylakoid membrane. Plays an important role in protecting the acceptor side of photosystem II (PSII) against oxidative damage, especially under iron-limiting growth conditions. In terms of biological role, may also be part of a periplasmic ABC transporter complex involved in iron import. The sequence is that of Iron deficiency-induced protein A (idiA) from Synechococcus elongatus (strain ATCC 33912 / PCC 7942 / FACHB-805) (Anacystis nidulans R2).